Here is a 323-residue protein sequence, read N- to C-terminus: Lipoyl synthase (323 aa).

[4Fe-4S] cluster contacts are provided by Cys56, Cys61, Cys67, Cys82, Cys86, Cys89, and Ser293. In terms of domain architecture, Radical SAM core spans 68 to 282; the sequence is WEDREATFLI…AAEARELGFA (215 aa).

The protein belongs to the radical SAM superfamily. Lipoyl synthase family. [4Fe-4S] cluster is required as a cofactor.

The protein resides in the cytoplasm. It catalyses the reaction [[Fe-S] cluster scaffold protein carrying a second [4Fe-4S](2+) cluster] + N(6)-octanoyl-L-lysyl-[protein] + 2 oxidized [2Fe-2S]-[ferredoxin] + 2 S-adenosyl-L-methionine + 4 H(+) = [[Fe-S] cluster scaffold protein] + N(6)-[(R)-dihydrolipoyl]-L-lysyl-[protein] + 4 Fe(3+) + 2 hydrogen sulfide + 2 5'-deoxyadenosine + 2 L-methionine + 2 reduced [2Fe-2S]-[ferredoxin]. It participates in protein modification; protein lipoylation via endogenous pathway; protein N(6)-(lipoyl)lysine from octanoyl-[acyl-carrier-protein]: step 2/2. Catalyzes the radical-mediated insertion of two sulfur atoms into the C-6 and C-8 positions of the octanoyl moiety bound to the lipoyl domains of lipoate-dependent enzymes, thereby converting the octanoylated domains into lipoylated derivatives. The sequence is that of Lipoyl synthase from Acidothermus cellulolyticus (strain ATCC 43068 / DSM 8971 / 11B).